Reading from the N-terminus, the 187-residue chain is MSAQIDPRTFRSVLGQFCTGITVITTVHDDVPVGFACQSFAALSLEPPLVLFCPTKVSRSWQAIEASGRFCVNVLTEKQKDVSARFGSKEPDKFAGIDWRPSELGSPIIEGSLAYIDCTVASVHDGGDHFVVFGAVESLSEVPAVKPRPLLFYRGDYTGIEPEKTTPAHWRDDLEAFLITTTQDTWL.

Residues 32 to 36 (PVGFA), 38 to 39 (QS), 53 to 55 (CPT), 59 to 60 (RS), and 85 to 86 (RF) each bind FAD. 152–155 (FYRG) contributes to the NAD(+) binding site.

It belongs to the non-flavoprotein flavin reductase family. HsaAB monooxygenase consists of an oxygenase component HsaA and a reductase component HsaB.

The enzyme catalyses a reduced flavin + NAD(+) = an oxidized flavin + NADH + 2 H(+). It functions in the pathway lipid metabolism; steroid biosynthesis. Catalyzes the reduction of free flavins (FMN or FAD) by NADH. Subsequently, the reduced flavins diffuse to the HsaA oxygenase subunit. The sequence is that of Flavin-dependent monooxygenase, reductase subunit HsaB (hsaB) from Mycobacterium tuberculosis (strain CDC 1551 / Oshkosh).